A 208-amino-acid polypeptide reads, in one-letter code: Large ribosomal subunit protein uL3 (208 aa).

Residues 116–148 (GFQGVIKRHGQSRGPMAHGSRYHRRPGSMGPVA) form a disordered region.

Belongs to the universal ribosomal protein uL3 family. In terms of assembly, part of the 50S ribosomal subunit. Forms a cluster with proteins L14 and L19.

In terms of biological role, one of the primary rRNA binding proteins, it binds directly near the 3'-end of the 23S rRNA, where it nucleates assembly of the 50S subunit. The chain is Large ribosomal subunit protein uL3 from Streptococcus pyogenes serotype M12 (strain MGAS2096).